Consider the following 454-residue polypeptide: Macrophage scavenger receptor types I and II (454 aa).

The segment at 1-22 (MAQWDSFTDQQEDTDSCSESVK) is disordered. At 1-50 (MAQWDSFTDQQEDTDSCSESVKFDARSNTALLPPNPKNGPPLQEKLKSFK) the chain is on the cytoplasmic side. Serine 27 is subject to Phosphoserine. A helical; Signal-anchor for type II membrane protein transmembrane segment spans residues 51–73 (AALIALYLLVFAVLIPIIAIMAA). A spacer region spans residues 74 to 109 (QLLKWEMKNCTVGSINANSVSSSLLGRGNDSEHEVR). Residues 74 to 454 (QLLKWEMKNC…GEDAGVTCTL (381 aa)) are Extracellular-facing. Asparagine 82, asparagine 102, asparagine 143, asparagine 184, asparagine 221, asparagine 249, and asparagine 267 each carry an N-linked (GlcNAc...) asparagine glycan. A coiled-coil region spans residues 199-256 (VKFQENTLKGQEEISKLKERVHNASAEIMSMKEEQVHLEQEIKREVKVLNNITNDLRL). The segment at 267–347 (NITLIQGPPG…KGEKGSGSIL (81 aa)) is disordered. One can recognise a Collagen-like domain in the interval 273–344 (GPPGPPGEKG…KGQKGEKGSG (72 aa)). Positions 353-453 (VRLVGGRGPH…HGEDAGVTCT (101 aa)) constitute an SRCR domain. 3 disulfide bridges follow: cysteine 378-cysteine 442, cysteine 391-cysteine 452, and cysteine 422-cysteine 432.

In terms of assembly, homotrimer. Interacts with MYO18A.

It localises to the membrane. Membrane glycoproteins implicated in the pathologic deposition of cholesterol in arterial walls during atherogenesis. Two types of receptor subunits exist. These receptors mediate the endocytosis of a diverse group of macromolecules, including modified low density lipoproteins (LDL). The protein is Macrophage scavenger receptor types I and II (MSR1) of Oryctolagus cuniculus (Rabbit).